The primary structure comprises 300 residues: Cutinase est2 (300 aa).

An N-terminal signal peptide occupies residues 1 to 39 (MSVTTPRRETSLLSRALRATAAAATAVVATVALAAPAQA). Residue Tyr-99 coordinates poly(ethylene terephthalate). Ser-169 acts as the Nucleophile in catalysis. 2 residues coordinate poly(ethylene terephthalate): Met-170 and Trp-194. Glu-213 lines the Ca(2+) pocket. Catalysis depends on Asp-215, which acts as the Charge relay system. Asp-243 serves as a coordination point for Ca(2+). The Charge relay system role is filled by His-247. A disulfide bond links Cys-280 and Cys-298. Glu-292 contributes to the Ca(2+) binding site.

The protein belongs to the AB hydrolase superfamily. As to quaternary structure, monomer. Requires Ca(2+) as cofactor.

It is found in the secreted. The protein resides in the periplasm. It carries out the reaction an acetyl ester + H2O = an aliphatic alcohol + acetate + H(+). The enzyme catalyses (ethylene terephthalate)(n) + H2O = (ethylene terephthalate)(n-1) + 4-[(2-hydroxyethoxy)carbonyl]benzoate + H(+). It catalyses the reaction a butanoate ester + H2O = an aliphatic alcohol + butanoate + H(+). The catalysed reaction is cutin + H2O = cutin monomers.. It carries out the reaction a hexanoate ester + H2O = an aliphatic alcohol + hexanoate + H(+). The enzyme catalyses an octanoate ester + H2O = an aliphatic alcohol + octanoate + H(+). Activated by calcium ions. Activated by magnesium ions. Activated by manganese ions. Inhibited by the serine hydrolase inhibitor phenylmethanesulfonyl fluoride (PMSF). Inhibited by the chelator ethylenediaminetetraacetic acid (EDTA). Inhibited by iron ions. Inhibited by aluminum ions. Inhibited by rubidium ions. Inhibited by lithium ions. Its function is as follows. Catalyzes the hydrolysis of cutin, a polyester that forms the structure of plant cuticle. Shows esterase activity towards p-nitrophenol-linked aliphatic esters (pNP-aliphatic esters). Capable of degrading the plastic poly(ethylene terephthalate) (PET), the most abundant polyester plastic in the world. Can also depolymerize the synthetic polyesters poly(epsilon-caprolactone) (PCL), poly(butylene succinate-co-adipate) (PBSA), poly(butylene succinate) (PBS), and poly(lactic acid) (PLA). The sequence is that of Cutinase est2 from Thermobifida alba (Thermomonospora alba).